A 593-amino-acid polypeptide reads, in one-letter code: Metal-response element-binding transcription factor 2 (593 aa).

Positions 1-24 (MRDSTGAGNSLVHKRSPLRRNQKT) are disordered. The segment covering 12–22 (VHKRSPLRRNQ) has biased composition (basic residues). Position 24 is a phosphothreonine (T24). The Tudor domain maps to 44–101 (CKFEEGQDVLARWSDGLFYLGTIKKINILKQSCFIIFEDSSKSWVLWKDIQTGATGSG). PHD-type zinc fingers lie at residues 102–157 (EMVC…CVFA) and 201–255 (QCYC…CSSG). Disordered stretches follow at residues 357-410 (VAFK…GPYT) and 444-486 (GIAH…TRTG). K360 is covalently cross-linked (Glycyl lysine isopeptide (Lys-Gly) (interchain with G-Cter in SUMO2)). Residues 360-374 (KAEKEPEGTSHEFKI) are compositionally biased toward basic and acidic residues. Over residues 447-470 (HSSNTSDVDLTGASSANETTSASI) the composition is skewed to polar residues. The residue at position 452 (S452) is a Phosphoserine. K522 participates in a covalent cross-link: Glycyl lysine isopeptide (Lys-Gly) (interchain with G-Cter in SUMO2).

It belongs to the Polycomblike family. Associates with the PRC2 complex, which consists of the core components EED, EZH1 or EZH2, SUZ12, and RBBP4, and various combinations of accessory subunits including AEBP2, JARID2, PHF19, MTF2 and EPOP. Forms a dimeric PRC2.1 (class 1, PRC-PCL) complex consisting of at least SUZ12, RBBP4, and PHF19 or MTF2; PHF19 and MTF2 stabilize the dimeric structure which enhances PRC2 interaction with chromatin.

It localises to the nucleus. Polycomb group (PcG) protein that specifically binds histone H3 trimethylated at 'Lys-36' (H3K36me3) and recruits the PRC2 complex, thus enhancing PRC2 H3K27me3 methylation activity. Regulates the transcriptional networks during embryonic stem cell self-renewal and differentiation. Promotes recruitment of the PRC2 complex to the inactive X chromosome in differentiating XX ES cells and PRC2 recruitment to target genes in undifferentiated ES cells. Required to repress Hox genes by enhancing H3K27me3 methylation of the PRC2 complex. In some conditions may act as an inhibitor of PRC2 activity: able to activate the CDKN2A gene and promote cellular senescence by suppressing the catalytic activity of the PRC2 complex locally. Binds to the metal-regulating-element (MRE) of MT1A gene promoter. The protein is Metal-response element-binding transcription factor 2 (Mtf2) of Mus musculus (Mouse).